The primary structure comprises 453 residues: Ribosomal protein uS12 methylthiotransferase RimO (453 aa).

The MTTase N-terminal domain maps to 5-120 (PKVGFVSLGC…VMQAVHSHLP (116 aa)). The [4Fe-4S] cluster site is built by Cys14, Cys50, Cys79, Cys151, Cys155, and Cys158. In terms of domain architecture, Radical SAM core spans 137-382 (LTPRHYAYLK…MEVAEEVSAQ (246 aa)). In terms of domain architecture, TRAM spans 385–453 (QRKVGKTLKV…ADGHDLWGEV (69 aa)).

This sequence belongs to the methylthiotransferase family. RimO subfamily. It depends on [4Fe-4S] cluster as a cofactor.

It localises to the cytoplasm. The catalysed reaction is L-aspartate(89)-[ribosomal protein uS12]-hydrogen + (sulfur carrier)-SH + AH2 + 2 S-adenosyl-L-methionine = 3-methylsulfanyl-L-aspartate(89)-[ribosomal protein uS12]-hydrogen + (sulfur carrier)-H + 5'-deoxyadenosine + L-methionine + A + S-adenosyl-L-homocysteine + 2 H(+). In terms of biological role, catalyzes the methylthiolation of an aspartic acid residue of ribosomal protein uS12. The protein is Ribosomal protein uS12 methylthiotransferase RimO of Burkholderia ambifaria (strain ATCC BAA-244 / DSM 16087 / CCUG 44356 / LMG 19182 / AMMD) (Burkholderia cepacia (strain AMMD)).